A 362-amino-acid polypeptide reads, in one-letter code: Solute carrier family 25 member 3 (362 aa).

The N-terminal 49 residues, 1 to 49 (MYSSVVHLARANPFNAPHLQLVHDGLAGPRSDPAGPPGPPRRSRNLAAA), are a transit peptide targeting the mitochondrion. Topologically, residues 50–63 (AVEEQYSCDYGSGR) are mitochondrial intermembrane. Solcar repeat units follow at residues 63–147 (RFFI…FKVL), 160–244 (WRTS…TVEA), and 261–339 (EQLV…VKVY). A helical membrane pass occupies residues 64–86 (FFILCGLGGIISCGTTHTALVPL). Residues 87 to 121 (DLVKCRMQVDPQKYKSIFNGFSVTLKEDGFRGLAK) lie on the Mitochondrial matrix side of the membrane. Residue Lys99 is modified to N6-acetyllysine. Lys112 carries the post-translational modification N6-methyllysine. Residues 122 to 141 (GWAPTFIGYSLQGLCKFGFY) traverse the membrane as a helical segment. Over 142–161 (EVFKVLYSNMLGEENAYLWR) the chain is Mitochondrial intermembrane. Residues 162 to 183 (TSLYLAASASAEFFADIALAPM) form a helical membrane-spanning segment. Over 184–218 (EAAKVRIQTQPGYANTLRDAAPKMYKEEGLKAFYK) the chain is Mitochondrial matrix. Tyr196 is modified (phosphotyrosine). Lys209 bears the N6-acetyllysine mark. A helical membrane pass occupies residues 219 to 238 (GVAPLWMRQIPYTMMKFACF). Residues 239–261 (ERTVEALYKFVVPKPRSECSKPE) lie on the Mitochondrial intermembrane side of the membrane. The helical transmembrane segment at 262-284 (QLVVTFVAGYIAGVFCAIVSHPA) threads the bilayer. Topologically, residues 285 to 314 (DSVVSVLNKEKGSSASEVLKRLGFRGVWKG) are mitochondrial matrix. Residues 315–333 (LFARIIMIGTLTALQWFIY) form a helical membrane-spanning segment. Over 334-362 (DSVKVYFRLPRPPPPEMPESLKKKLGYTQ) the chain is Mitochondrial intermembrane.

This sequence belongs to the mitochondrial carrier (TC 2.A.29) family. As to quaternary structure, interacts with PPIF; the interaction is impaired by CsA. As to expression, expressed in heart, diaphragm and skeletal muscle (at protein level). Not detected in liver, lung, brain, and kidney (at protein level). In terms of tissue distribution, ubiquitous (at protein level).

Its subcellular location is the mitochondrion inner membrane. It catalyses the reaction phosphate(in) + H(+)(in) = phosphate(out) + H(+)(out). Its activity is regulated as follows. Up-regulated in the presence of cardiolipin. Its function is as follows. Inorganic ion transporter that transports phosphate or copper ions across the mitochondrial inner membrane into the matrix compartment. Mediates proton-coupled symport of phosphate ions necessary for mitochondrial oxidative phosphorylation of ADP to ATP. Transports copper ions probably in the form of anionic copper(I) complexes to maintain mitochondrial matrix copper pool and to supply copper for cytochrome C oxidase complex assembly. May also play a role in regulation of the mitochondrial permeability transition pore (mPTP). The protein is Solute carrier family 25 member 3 of Bos taurus (Bovine).